Here is a 93-residue protein sequence, read N- to C-terminus: UPF0337 protein Bd3330 (93 aa).

It belongs to the UPF0337 (CsbD) family.

The chain is UPF0337 protein Bd3330 from Bdellovibrio bacteriovorus (strain ATCC 15356 / DSM 50701 / NCIMB 9529 / HD100).